Consider the following 192-residue polypeptide: Thymidine kinase (192 aa).

ATP-binding positions include 9–16 and 87–90; these read SAMNAGKS and DECQ. Catalysis depends on glutamate 88, which acts as the Proton acceptor. Zn(2+) contacts are provided by cysteine 145, cysteine 147, cysteine 182, and histidine 185.

This sequence belongs to the thymidine kinase family. As to quaternary structure, homotetramer.

The protein localises to the cytoplasm. It catalyses the reaction thymidine + ATP = dTMP + ADP + H(+). The protein is Thymidine kinase of Vibrio cholerae serotype O1 (strain ATCC 39315 / El Tor Inaba N16961).